Reading from the N-terminus, the 647-residue chain is Pumilio homolog 3 (647 aa).

The segment covering 1-10 has biased composition (basic residues); the sequence is MEVKGKKKFT. Residues 1–123 form a disordered region; the sequence is MEVKGKKKFT…KKKKELKQSR (123 aa). Lys-33 is subject to N6-acetyllysine. The segment covering 59–68 has biased composition (basic residues); it reads PGKKGVKQFK. Residues 102 to 123 are compositionally biased toward basic and acidic residues; the sequence is SGAKKPKWDDFKKKKKELKQSR. The Nuclear localization signal motif lies at 105-117; the sequence is KKPKWDDFKKKKK. Positions 142–509 constitute a PUM-HD domain; that stretch reads ESLRRKDCDK…VVLDKSACVL (368 aa). Pumilio repeat units follow at residues 176–211, 212–247, 248–276, 288–324, 325–360, 361–396, 397–434, 435–503, 504–550, 551–595, and 596–635; these read HDST…LSKA, KYSR…MLRH, SEAS…ELYG, PTLD…VIKH, SLVH…LAHT, HDGA…VANG, QYSH…IVND, KYGR…VVLD, KSAC…VAEH, PAGH…WASI, and NRGA…KSSS.

As to quaternary structure, interacts with PARP1 (via catalytic domain). As to expression, in the adult eye, expressed primarily in retinal ganglion cells and, to a lesser extent, in the pigmented cells.

It is found in the nucleus. It localises to the nucleolus. The protein localises to the nucleoplasm. The protein resides in the chromosome. Functionally, inhibits the poly(ADP-ribosyl)ation activity of PARP1 and the degradation of PARP1 by CASP3 following genotoxic stress. Binds to double-stranded RNA or DNA without sequence specificity. Involved in development of the eye and of primordial germ cells. The sequence is that of Pumilio homolog 3 from Mus musculus (Mouse).